We begin with the raw amino-acid sequence, 137 residues long: Golgin subfamily A member 7 (137 aa).

2 S-palmitoyl cysteine lipidation sites follow: Cys69 and Cys72.

This sequence belongs to the ERF4 family. As to quaternary structure, interacts with ZDHHC9.

The protein localises to the golgi apparatus membrane. May be involved in protein transport from Golgi to cell surface. The ZDHHC9-GOLGA7 complex is a palmitoyltransferase specific for HRAS and NRAS. The sequence is that of Golgin subfamily A member 7 (GOLGA7) from Gallus gallus (Chicken).